We begin with the raw amino-acid sequence, 312 residues long: Aspartate carbamoyltransferase catalytic subunit (312 aa).

Carbamoyl phosphate is bound by residues R58 and T59. L-aspartate is bound at residue K86. Residues R108, H136, and Q139 each coordinate carbamoyl phosphate. L-aspartate contacts are provided by R169 and R223. 2 residues coordinate carbamoyl phosphate: G264 and P265.

Belongs to the aspartate/ornithine carbamoyltransferase superfamily. ATCase family. In terms of assembly, heterododecamer (2C3:3R2) of six catalytic PyrB chains organized as two trimers (C3), and six regulatory PyrI chains organized as three dimers (R2).

The catalysed reaction is carbamoyl phosphate + L-aspartate = N-carbamoyl-L-aspartate + phosphate + H(+). The protein operates within pyrimidine metabolism; UMP biosynthesis via de novo pathway; (S)-dihydroorotate from bicarbonate: step 2/3. Functionally, catalyzes the condensation of carbamoyl phosphate and aspartate to form carbamoyl aspartate and inorganic phosphate, the committed step in the de novo pyrimidine nucleotide biosynthesis pathway. In Acetivibrio thermocellus (strain ATCC 27405 / DSM 1237 / JCM 9322 / NBRC 103400 / NCIMB 10682 / NRRL B-4536 / VPI 7372) (Clostridium thermocellum), this protein is Aspartate carbamoyltransferase catalytic subunit.